Here is a 528-residue protein sequence, read N- to C-terminus: GMP synthase [glutamine-hydrolyzing] (528 aa).

Residues 13–204 (AIVILDFGSQ…VYDICSCEPD (192 aa)) enclose the Glutamine amidotransferase type-1 domain. Cys90 acts as the Nucleophile in catalysis. Catalysis depends on residues His178 and Glu180. The GMPS ATP-PPase domain maps to 205–403 (WTTNLFIDEA…LGLPDEIVRR (199 aa)). An ATP-binding site is contributed by 232 to 238 (SGGVDSS).

As to quaternary structure, homodimer.

It carries out the reaction XMP + L-glutamine + ATP + H2O = GMP + L-glutamate + AMP + diphosphate + 2 H(+). It functions in the pathway purine metabolism; GMP biosynthesis; GMP from XMP (L-Gln route): step 1/1. Functionally, catalyzes the synthesis of GMP from XMP. This Prochlorococcus marinus (strain NATL1A) protein is GMP synthase [glutamine-hydrolyzing].